The chain runs to 650 residues: Acetyl-coenzyme A synthetase (650 aa).

Residues 189–192 (RGGK), Thr-307, and Asn-331 each bind CoA. Residues 383–385 (GEP), 407–412 (DTWWQT), Asp-496, and Arg-511 each bind ATP. Ser-519 is a binding site for CoA. Arg-522 is a binding site for ATP. Mg(2+) contacts are provided by Val-533, His-535, and Val-538. Residue Arg-580 coordinates CoA. Lys-605 is modified (N6-acetyllysine).

It belongs to the ATP-dependent AMP-binding enzyme family. Mg(2+) is required as a cofactor. In terms of processing, acetylated. Deacetylation by the SIR2-homolog deacetylase activates the enzyme.

The enzyme catalyses acetate + ATP + CoA = acetyl-CoA + AMP + diphosphate. In terms of biological role, catalyzes the conversion of acetate into acetyl-CoA (AcCoA), an essential intermediate at the junction of anabolic and catabolic pathways. AcsA undergoes a two-step reaction. In the first half reaction, AcsA combines acetate with ATP to form acetyl-adenylate (AcAMP) intermediate. In the second half reaction, it can then transfer the acetyl group from AcAMP to the sulfhydryl group of CoA, forming the product AcCoA. The chain is Acetyl-coenzyme A synthetase from Syntrophobacter fumaroxidans (strain DSM 10017 / MPOB).